The primary structure comprises 318 residues: Coproporphyrin III ferrochelatase (318 aa).

Fe(2+)-binding residues include histidine 186 and glutamate 268.

This sequence belongs to the ferrochelatase family.

The protein localises to the cytoplasm. The catalysed reaction is Fe-coproporphyrin III + 2 H(+) = coproporphyrin III + Fe(2+). It functions in the pathway porphyrin-containing compound metabolism; protoheme biosynthesis. Functionally, involved in coproporphyrin-dependent heme b biosynthesis. Catalyzes the insertion of ferrous iron into coproporphyrin III to form Fe-coproporphyrin III. The chain is Coproporphyrin III ferrochelatase from Lactococcus lactis subsp. cremoris (strain MG1363).